Reading from the N-terminus, the 365-residue chain is Class I histocompatibility antigen, Gogo-A*0201 alpha chain (365 aa).

Positions 1 to 24 (MAVMAPRTLLLLLLGALALTQTWA) are cleaved as a signal peptide. The interval 25–114 (GSHSMRYFST…LRGYYNQSEA (90 aa)) is alpha-1. Residues 25-308 (GSHSMRYFST…EPSSQPTIPI (284 aa)) are Extracellular-facing. N-linked (GlcNAc...) asparagine glycosylation is present at Asn110. An alpha-2 region spans residues 115 to 206 (GSHTIQKMYG…ENGKETLQRT (92 aa)). 2 disulfides stabilise this stretch: Cys125–Cys188 and Cys227–Cys283. The segment at 207-298 (DAPKTHMTHH…SLPKPLTLRW (92 aa)) is alpha-3. Positions 209 to 295 (PKTHMTHHAV…QHESLPKPLT (87 aa)) constitute an Ig-like C1-type domain. The connecting peptide stretch occupies residues 299–308 (EPSSQPTIPI). Residues 309-332 (VGIIAGLVLFGAVIAGAVIAAVRW) traverse the membrane as a helical segment. Topologically, residues 333–365 (RRKSSDRKGGSYSQAASSDSAQGSDVSLTACKV) are cytoplasmic. The disordered stretch occupies residues 338 to 365 (DRKGGSYSQAASSDSAQGSDVSLTACKV). Residues 342–359 (GSYSQAASSDSAQGSDVS) show a composition bias toward low complexity. At Ser343 the chain carries Phosphoserine. At Tyr344 the chain carries Phosphotyrosine. A phosphoserine mark is found at Ser345, Ser349, Ser350, Ser352, Ser356, and Ser359.

This sequence belongs to the MHC class I family. In terms of assembly, heterodimer of an alpha chain and a beta chain (beta-2-microglobulin).

The protein resides in the membrane. Functionally, involved in the presentation of foreign antigens to the immune system. The polypeptide is Class I histocompatibility antigen, Gogo-A*0201 alpha chain (Gorilla gorilla gorilla (Western lowland gorilla)).